Here is a 69-residue protein sequence, read N- to C-terminus: Large ribosomal subunit protein uL29 (69 aa).

This sequence belongs to the universal ribosomal protein uL29 family.

The protein is Large ribosomal subunit protein uL29 of Clostridium perfringens (strain ATCC 13124 / DSM 756 / JCM 1290 / NCIMB 6125 / NCTC 8237 / Type A).